Reading from the N-terminus, the 537-residue chain is Hydroxylamine reductase (537 aa).

Positions 3, 6, 15, and 21 each coordinate [4Fe-4S] cluster. Residues histidine 239, glutamate 263, cysteine 307, cysteine 393, cysteine 421, cysteine 446, glutamate 480, and lysine 482 each contribute to the hybrid [4Fe-2O-2S] cluster site. Cysteine 393 bears the Cysteine persulfide mark.

Belongs to the HCP family. Requires [4Fe-4S] cluster as cofactor. Hybrid [4Fe-2O-2S] cluster is required as a cofactor.

Its subcellular location is the cytoplasm. It carries out the reaction A + NH4(+) + H2O = hydroxylamine + AH2 + H(+). Catalyzes the reduction of hydroxylamine to form NH(3) and H(2)O. The protein is Hydroxylamine reductase of Lawsonia intracellularis (strain PHE/MN1-00).